The chain runs to 484 residues: ATP-dependent rRNA helicase RRP3 (484 aa).

Low complexity-rich tracts occupy residues 1-14 (MPSP…SMSQ) and 22-34 (PSPA…APEA). A disordered region spans residues 1–38 (MPSPSPEASSSMSQPGPPSRSPSPASSNPDAPEASHNK). Positions 38–66 (KTFADLGISPELCRACASMGFKKPSDIQA) match the Q motif motif. Positions 69-240 (IPHALEGKDI…RASLNKPVRV (172 aa)) constitute a Helicase ATP-binding domain. 82–89 (AQTGSGKT) contacts ATP. The short motif at 188–191 (DEAD) is the DEAD box element. The region spanning 263–411 (NKDAYLLYLA…SFDVDKEAVA (149 aa)) is the Helicase C-terminal domain. The interval 425-484 (ALEMRESGTGGGGGKRGRDKGKRKTFGDGDDRDRDDDVVEAGVPRKKNKFTPGGKKKARK) is disordered. Basic residues-rich tracts occupy residues 439-448 (KRGRDKGKRK) and 468-484 (PRKK…KARK).

It belongs to the DEAD box helicase family. DDX47/RRP3 subfamily. Interacts with the SSU processome.

The protein resides in the nucleus. The catalysed reaction is ATP + H2O = ADP + phosphate + H(+). Functionally, ATP-dependent rRNA helicase required for pre-ribosomal RNA processing. Involved in the maturation of the 35S-pre-rRNA and to its cleavage to mature 18S rRNA. This Cryptococcus neoformans var. neoformans serotype D (strain B-3501A) (Filobasidiella neoformans) protein is ATP-dependent rRNA helicase RRP3.